A 106-amino-acid polypeptide reads, in one-letter code: MSKNFEWVTPDSDLLERESTKVQPPKLYNVVLNNDDYTPMDFVIEVLERFFSHDIDKATQIMLKVHYEGKAVCGTYSAEIAETKVAQVTMYARENEHPLLCTMEQA.

This sequence belongs to the ClpS family. Binds to the N-terminal domain of the chaperone ClpA.

Functionally, involved in the modulation of the specificity of the ClpAP-mediated ATP-dependent protein degradation. This is ATP-dependent Clp protease adapter protein ClpS from Vibrio parahaemolyticus serotype O3:K6 (strain RIMD 2210633).